Consider the following 274-residue polypeptide: Orotidine 5'-phosphate decarboxylase (274 aa).

Substrate contacts are provided by residues Asp-40, 62–64 (KTH), 93–102 (DRKFVDIGNT), Tyr-227, and Arg-245. The Proton donor role is filled by Lys-95.

This sequence belongs to the OMP decarboxylase family.

The enzyme catalyses orotidine 5'-phosphate + H(+) = UMP + CO2. Its pathway is pyrimidine metabolism; UMP biosynthesis via de novo pathway; UMP from orotate: step 2/2. The polypeptide is Orotidine 5'-phosphate decarboxylase (URA3) (Coccidioides posadasii (strain RMSCC 757 / Silveira) (Valley fever fungus)).